A 618-amino-acid polypeptide reads, in one-letter code: Sodium/iodide cotransporter (618 aa).

Residues M1–A14 are Extracellular-facing. A helical transmembrane segment spans residues W15–G31. Over L32 to A56 the chain is Cytoplasmic. A discontinuously helical membrane pass occupies residues V57–A80. The Na(+) site is built by S69, V71, and Q72. Residue V76 coordinates iodide. Topologically, residues A81–G84 are extracellular. The helical transmembrane segment at L85–F105 threads the bilayer. Iodide is bound at residue M90. The Cytoplasmic segment spans residues L106 to R130. A helical membrane pass occupies residues L131–N157. Y144 provides a ligand contact to Na(+). Residues Q158 to D163 lie on the Extracellular side of the membrane. Residues I164–V181 form a helical membrane-spanning segment. Topologically, residues G182–W189 are cytoplasmic. A helical membrane pass occupies residues T190 to R208. Topologically, residues G209 to T243 are extracellular. A discontinuously helical membrane pass occupies residues F244 to V266. W255 contributes to the iodide binding site. A Na(+)-binding site is contributed by M258. Residues Q267–A278 are Cytoplasmic-facing. Residues K279–I301 form a helical membrane-spanning segment. At V302 to D335 the chain is on the extracellular side. The helical transmembrane segment at L336–A363 threads the bilayer. Residues A364–I386 are Cytoplasmic-facing. A helical membrane pass occupies residues S387–L408. Residues G409–G411 are Extracellular-facing. A helical membrane pass occupies residues V412–L437. L413 contacts iodide. Na(+) is bound by residues S416 and F417. Residue F417 coordinates iodide. Residues P438–N441 lie on the Cytoplasmic side of the membrane. Residues T442–L465 traverse the membrane as a helical segment. The Extracellular segment spans residues Y466–A520. 2 N-linked (GlcNAc...) asparagine glycosylation sites follow: N485 and N497. A helical transmembrane segment spans residues I521–T545. The Cytoplasmic segment spans residues G546–L618. At S551 the chain carries Phosphoserine; by PKA. Positions E587–L618 are disordered.

Belongs to the sodium:solute symporter (SSF) (TC 2.A.21) family. As to quaternary structure, monomer.

It localises to the cell membrane. It is found in the cytoplasm. The enzyme catalyses iodide(out) + 2 Na(+)(out) = iodide(in) + 2 Na(+)(in). It catalyses the reaction chlorate(out) + 2 Na(+)(out) = chlorate(in) + 2 Na(+)(in). The catalysed reaction is thiocyanate(out) + 2 Na(+)(out) = thiocyanate(in) + 2 Na(+)(in). It carries out the reaction nitrate(out) + 2 Na(+)(out) = nitrate(in) + 2 Na(+)(in). The enzyme catalyses selenocyanate(out) + 2 Na(+)(out) = selenocyanate(in) + 2 Na(+)(in). Its activity is regulated as follows. Perchlorate inhibits iodide transport activity. Oxyanions inhibit iodide transport activity by blocking the binding sites for iodide and one of the sodium ions. Sodium:iodide symporter that mediates the transport of iodide into the thyroid gland. Can also mediate the transport of chlorate, thiocynate, nitrate and selenocynate. The chain is Sodium/iodide cotransporter (Slc5a5) from Rattus norvegicus (Rat).